Here is a 520-residue protein sequence, read N- to C-terminus: Maturase K (520 aa).

The protein belongs to the intron maturase 2 family. MatK subfamily.

The protein resides in the plastid. It is found in the chloroplast. Usually encoded in the trnK tRNA gene intron. Probably assists in splicing its own and other chloroplast group II introns. In Aspidistra elatior (Cast-iron plant), this protein is Maturase K.